Here is a 952-residue protein sequence, read N- to C-terminus: Disintegrin and metalloproteinase domain-containing protein adm-2 (952 aa).

Over Met1 to Thr672 the chain is Extracellular. Asn125 and Asn301 each carry an N-linked (GlcNAc...) asparagine glycan. The 197-residue stretch at Arg177–Pro373 folds into the Peptidase M12B domain. 3 disulfides stabilise this stretch: Cys287-Cys368, Cys330-Cys352, and Cys332-Cys337. Position 312 (His312) interacts with Zn(2+). Residue Glu313 is part of the active site. Zn(2+)-binding residues include His316 and His322. The 88-residue stretch at Asp379–Asn466 folds into the Disintegrin domain. Residue Asn406 is glycosylated (N-linked (GlcNAc...) asparagine). 4 disulfides stabilise this stretch: Cys438–Cys458, Cys624–Cys634, Cys628–Cys640, and Cys642–Cys651. In terms of domain architecture, EGF-like spans Val620–Glu652. Residues Leu673–Val693 traverse the membrane as a helical segment. At Tyr694–Lys952 the chain is on the cytoplasmic side. 2 disordered regions span residues Ile778–Thr809 and Ser829–Asp938. Basic and acidic residues-rich tracts occupy residues Ala798–Thr809 and Pro849–Asn873. Residues Gln905–His914 are compositionally biased toward pro residues. A compositionally biased stretch (basic and acidic residues) spans Lys925–Asp938.

Zn(2+) serves as cofactor. In terms of tissue distribution, expressed in hyp7 large epidermal syncytium (punctate distribution), seam cell syncytia, anterior epidermis, neurons located in the head, tail and central body, proximal oogenic cells (levels increasing in maturing oocytes) and myoepithelial cells of the spermatheca (at protein level). Not detected in mature sperm cells.

Its subcellular location is the cell membrane. It is found in the endosome membrane. It localises to the lysosome membrane. In terms of biological role, metalloprotease that cleaves and releases a number of molecules. Negative regulator of lrp-1 protein levels, potentially by influencing its endosomal trafficking. Involved in regulating the molting process. The sequence is that of Disintegrin and metalloproteinase domain-containing protein adm-2 from Caenorhabditis elegans.